The sequence spans 693 residues: CREB-regulated transcription coactivator 2 (693 aa).

Positions 1–20 are enriched in polar residues; the sequence is MATSGANGPGSATASASNPR. The segment at 1–30 is disordered; the sequence is MATSGANGPGSATASASNPRKFSEKIALQK. The residue at position 2 (Ala-2) is an N-acetylalanine. Arg-51 is modified (asymmetric dimethylarginine; by PRMT6). Residues Ser-70, Ser-86, and Ser-90 each carry the phosphoserine modification. Residues Arg-99, Arg-120, and Arg-123 each carry the asymmetric dimethylarginine; by PRMT6 modification. Ser-136 is subject to Phosphoserine. 2 positions are modified to asymmetric dimethylarginine; by PRMT6: Arg-161 and Arg-168. Thr-169 is modified (phosphothreonine). The residue at position 171 (Ser-171) is a Phosphoserine. Residues 174 to 188 are compositionally biased toward polar residues; it reads ALHTSVMNPSPQDTY. The disordered stretch occupies residues 174–210; sequence ALHTSVMNPSPQDTYPSPAAPSVLPSRRGGCLDGETD. The segment at 209–215 is required for interaction with COP1; sequence TDSKVPA. Lys-234 participates in a covalent cross-link: Glycyl lysine isopeptide (Lys-Gly) (interchain with G-Cter in SUMO2). The short motif at 271–287 is the Nuclear export signal element; the sequence is TGGSLPDLTNLHFPPPL. 3 disordered regions span residues 271-307, 335-463, and 476-548; these read TGGS…GSST, HSPL…SPTL, and KLPT…QSYH. A Phosphoserine; by MARK2 modification is found at Ser-274. Ser-306 is subject to Phosphoserine. Over residues 339–351 the composition is skewed to polar residues; that stretch reads SHPSFQSSLSNPN. 2 stretches are compositionally biased toward low complexity: residues 352-378 and 386-424; these read LQAS…SSLA and SLGH…PGAS. 4 positions are modified to phosphoserine: Ser-368, Ser-393, Ser-433, and Ser-456. Positions 447 to 463 are enriched in polar residues; the sequence is SQQQLPKQFSPTMSPTL. Position 488 is a phosphotyrosine (Tyr-488). 2 positions are modified to phosphoserine: Ser-489 and Ser-492. Phosphothreonine is present on Thr-501. Phosphoserine occurs at positions 613 and 624.

This sequence belongs to the TORC family. Binds, as a tetramer, through its N-terminal region, with the bZIP domain of CREB1. 'Arg-314' in the bZIP domain of CREB1 is essential for this interaction. Interaction, via its C-terminal, with TAF4, enhances recruitment of TAF4 to CREB1. Interacts with SIK2. Interacts with 14-3-3 proteins, YWHAB and YWHAG. Interacts (probably when phosphorylated at Ser-171) with YWHAE. Interacts with calmodulin-dependent catalytic subunit PPP3CA/calcineurin A. Interaction with COP1 mediates nuclear export and degradation of CRTC2. In terms of processing, phosphorylation/dephosphorylation states of Ser-171 are required for regulating transduction of CREB activity. CRTCs/TORCs are inactive when phosphorylated, and active when dephosphorylated at this site. This primary site of phosphorylation, is regulated by cAMP and calcium levels and is dependent on the phosphorylation of SIKs (SIK1 and SIK2) by LKB1. Following adenylyl cyclase activation, dephosphorylated at Ser-171 by PPP3CA/calcineurin A resulting in CRTC2 dissociation from 14-3-3 proteins and PPP3CA. Both insulin and AMPK increase this phosphorylation of CRTC2 while glucagon suppresses it. Phosphorylation at Ser-274 by MARK2 is induced under low glucose conditions and dephosphorylated in response to glucose influx. Phosphorylation at Ser-274 promotes interaction with 14-3-3 proteins and translocation to the cytoplasm. Asymmetric dimethylation of arginine resisues by PRMT6 enhances the association of CRTC2 with CREB on the promoters of gluconeogenic genes.

It localises to the cytoplasm. It is found in the nucleus. Transcriptional coactivator for CREB1 which activates transcription through both consensus and variant cAMP response element (CRE) sites. Acts as a coactivator, in the SIK/TORC signaling pathway, being active when dephosphorylated and acts independently of CREB1 'Ser-133' phosphorylation. Enhances the interaction of CREB1 with TAF4. Regulates gluconeogenesis as a component of the LKB1/AMPK/TORC2 signaling pathway. Regulates the expression of specific genes such as the steroidogenic gene, StAR. Potent coactivator of PPARGC1A and inducer of mitochondrial biogenesis in muscle cells. This chain is CREB-regulated transcription coactivator 2 (CRTC2), found in Bos taurus (Bovine).